A 272-amino-acid polypeptide reads, in one-letter code: MLNLNELKSGFHYFVMGWHFITQKGLRRFVIMPIVLNTILLCGLFWLFISQISSAIDWMMNFIPDWLSFLSVILLTLSILTILLLFYFTFTTFSGFIAAPFNGLLAEKVEKMLTGENINDDGLVDIMRDVPRMLAREWQKLRYSLPKIIALFLLSFIPLVGQTIVPVLTFLFTCWMMAIQYCDYPFDNHKVSFDIMKNALGNQRTQSLTFGGLVTCCTFVPVINLLIMPVAVCGATLMWVENYRNDLGFNMNRSFSSQTGLDVRSENTGIVK.

4 helical membrane-spanning segments follow: residues 29 to 49 (FVIM…WLFI), 66 to 86 (WLSF…LLLF), 148 to 168 (IIAL…VPVL), and 219 to 239 (FVPV…TLMW).

The protein belongs to the CysZ family.

It localises to the cell inner membrane. In terms of biological role, high affinity, high specificity proton-dependent sulfate transporter, which mediates sulfate uptake. Provides the sulfur source for the cysteine synthesis pathway. This chain is Sulfate transporter CysZ, found in Haemophilus influenzae (strain PittGG).